Consider the following 617-residue polypeptide: tRNA uridine 5-carboxymethylaminomethyl modification enzyme MnmG (617 aa).

FAD is bound by residues 9–14 (GAGHAG), V120, and T175. 267–281 (GPRYCPSIEDKVVRF) is a binding site for NAD(+). Q364 serves as a coordination point for FAD.

Belongs to the MnmG family. As to quaternary structure, homodimer. Heterotetramer of two MnmE and two MnmG subunits. The cofactor is FAD.

Its subcellular location is the cytoplasm. Functionally, NAD-binding protein involved in the addition of a carboxymethylaminomethyl (cmnm) group at the wobble position (U34) of certain tRNAs, forming tRNA-cmnm(5)s(2)U34. The protein is tRNA uridine 5-carboxymethylaminomethyl modification enzyme MnmG of Onion yellows phytoplasma (strain OY-M).